A 294-amino-acid polypeptide reads, in one-letter code: Protoheme IX farnesyltransferase (294 aa).

The next 9 helical transmembrane spans lie at 13-33 (IIFGNLISVIGGFLLASKGVI), 35-55 (YPLFISTLLGVSLVVASGCVF), 84-104 (ISLIYASILGIAGIVLLYAAA), 107-127 (LAMQLAIIGFVVYVGVYSLYM), 132-152 (VYGTLIGSLSGAAPPVIGYCA), 162-182 (LILLLIFSLWQMPHSYAIAIF), 208-228 (IILYILAFMIATLMLAISGYA), 229-249 (GYKYLVVAAAVSVWWLGMALS), and 264-284 (FIFSIVAITSLSVMMSIDPHV).

The protein belongs to the UbiA prenyltransferase family. Protoheme IX farnesyltransferase subfamily.

The protein localises to the cell inner membrane. The enzyme catalyses heme b + (2E,6E)-farnesyl diphosphate + H2O = Fe(II)-heme o + diphosphate. The protein operates within porphyrin-containing compound metabolism; heme O biosynthesis; heme O from protoheme: step 1/1. In terms of biological role, converts heme B (protoheme IX) to heme O by substitution of the vinyl group on carbon 2 of heme B porphyrin ring with a hydroxyethyl farnesyl side group. The sequence is that of Protoheme IX farnesyltransferase from Photorhabdus laumondii subsp. laumondii (strain DSM 15139 / CIP 105565 / TT01) (Photorhabdus luminescens subsp. laumondii).